A 238-amino-acid polypeptide reads, in one-letter code: MGKRLISQNRGRGTPTYRAPSHKYKADLRHPRVDENSSLRGEVVGIEHDPARSAPIAKVAFENGEELFLLASEGIAVGNIIECGDDAEVKPGNIVPIGNVPEGFFICNVESKPNDGGKFVRSSGVYATVVTHEATRTAVSMPSGNIKWLNPKCRAVVGIVAGSGRVDRPWLKAGKKYHKMKTRAAKYPRVSAVAMNPRDHPFGGGAWKHPGKPTTVSRNAPPGRKVGLIAARRTGMKR.

Polar residues predominate over residues 1 to 11; the sequence is MGKRLISQNRG. Disordered regions lie at residues 1–22 and 202–223; these read MGKR…APSH and FGGG…APPG.

Belongs to the universal ribosomal protein uL2 family. In terms of assembly, part of the 50S ribosomal subunit. Forms a bridge to the 30S subunit in the 70S ribosome.

One of the primary rRNA binding proteins. Required for association of the 30S and 50S subunits to form the 70S ribosome, for tRNA binding and peptide bond formation. It has been suggested to have peptidyltransferase activity; this is somewhat controversial. Makes several contacts with the 16S rRNA in the 70S ribosome. The sequence is that of Large ribosomal subunit protein uL2 from Methanosarcina acetivorans (strain ATCC 35395 / DSM 2834 / JCM 12185 / C2A).